An 89-amino-acid polypeptide reads, in one-letter code: Small ribosomal subunit protein bS20 (89 aa).

It belongs to the bacterial ribosomal protein bS20 family.

Binds directly to 16S ribosomal RNA. The polypeptide is Small ribosomal subunit protein bS20 (Syntrophus aciditrophicus (strain SB)).